The primary structure comprises 559 residues: 2-succinyl-5-enolpyruvyl-6-hydroxy-3-cyclohexene-1-carboxylate synthase (559 aa).

Belongs to the TPP enzyme family. MenD subfamily. Homodimer. It depends on Mg(2+) as a cofactor. The cofactor is Mn(2+). Thiamine diphosphate is required as a cofactor.

It catalyses the reaction isochorismate + 2-oxoglutarate + H(+) = 5-enolpyruvoyl-6-hydroxy-2-succinyl-cyclohex-3-ene-1-carboxylate + CO2. It functions in the pathway quinol/quinone metabolism; 1,4-dihydroxy-2-naphthoate biosynthesis; 1,4-dihydroxy-2-naphthoate from chorismate: step 2/7. Its pathway is quinol/quinone metabolism; menaquinone biosynthesis. Functionally, catalyzes the thiamine diphosphate-dependent decarboxylation of 2-oxoglutarate and the subsequent addition of the resulting succinic semialdehyde-thiamine pyrophosphate anion to isochorismate to yield 2-succinyl-5-enolpyruvyl-6-hydroxy-3-cyclohexene-1-carboxylate (SEPHCHC). The sequence is that of 2-succinyl-5-enolpyruvyl-6-hydroxy-3-cyclohexene-1-carboxylate synthase from Edwardsiella ictaluri (strain 93-146).